The sequence spans 627 residues: Plastin-3 (627 aa).

EF-hand domains are found at residues 8–43 (EELEELREAFGKVDLNGNGFICDHELHDLFKEANLP) and 48–83 (KVREIIQKLMEEGDKNKDNMISFDEFVSIFQELKSG). The Ca(2+) site is built by Asp21, Asn23, Asn25, Glu32, Asp61, Asn63, Asp65, Met67, and Glu72. Actin-binding regions lie at residues 105-378 (TSEL…ALTK) and 379-624 (PENQ…GRGM). 4 consecutive Calponin-homology (CH) domains span residues 119-235 (EEER…KIGL), 263-374 (LSPE…NKYP), 393-503 (TREE…RRYT), and 515-624 (KVND…GRGM).

The protein resides in the cytoplasm. Actin-bundling protein. This chain is Plastin-3 (pls3), found in Danio rerio (Zebrafish).